The primary structure comprises 620 residues: Palmitoyltransferase ZDHHC17 (620 aa).

The Cytoplasmic portion of the chain corresponds to 1-292; the sequence is MADALVGYEK…LKMDKEFRQK (292 aa). 6 ANK repeats span residues 77 to 106, 111 to 140, 144 to 173, 177 to 207, 212 to 241, and 245 to 274; these read ENVT…IVDQ, LNST…DPSL, EGCS…DVDM, NGMT…SVNL, HKNT…NVDA, and KGET…AKGY. 2 consecutive transmembrane segments (helical) span residues 293–313 and 314–334; these read VMLG…DLDI and DSWL…QFLS. Residues 335 to 345 are Cytoplasmic-facing; it reads KSFFDHSMHSA. Residues 346–366 form a helical membrane-spanning segment; sequence LPLGIYLATKFWMYITWFYWF. Residues 367–369 lie on the Lumenal side of the membrane; the sequence is WND. A helical membrane pass occupies residues 370-390; sequence LPFVTIHLPFLLNSLALFYNF. Topologically, residues 391-469 are cytoplasmic; it reads GKSWKSDPGI…NCVGSGNHRY (79 aa). Residues 425-475 form the DHHC domain; it reads IFCSTCLIRKPIRSKHCAVCNRCIAKFDHHCPWVGNCVGSGNHRYFMGYLF. The active-site S-palmitoyl cysteine intermediate is the cysteine 455. Residues 470-490 traverse the membrane as a helical segment; the sequence is FMGYLFFLLCMICWMMYGCIC. At 491 to 504 the chain is on the lumenal side; that stretch reads YWRIHCATSYTKDG. The chain crosses the membrane as a helical span at residues 505 to 524; sequence FWIYITQIATCSPWMFWMFL. Residues 525 to 620 lie on the Cytoplasmic side of the membrane; the sequence is NSVFHFMWVA…QTSGSGYQLV (96 aa).

Belongs to the DHHC palmitoyltransferase family. AKR/ZDHHC17 subfamily. In terms of processing, autopalmitoylated.

Its subcellular location is the golgi apparatus membrane. The protein localises to the cytoplasmic vesicle membrane. It is found in the presynaptic cell membrane. The enzyme catalyses L-cysteinyl-[protein] + hexadecanoyl-CoA = S-hexadecanoyl-L-cysteinyl-[protein] + CoA. It carries out the reaction L-cysteinyl-[protein] + tetradecanoyl-CoA = S-tetradecanoyl-L-cysteinyl-[protein] + CoA. The catalysed reaction is L-cysteinyl-[protein] + octadecanoyl-CoA = S-octadecanoyl-L-cysteinyl-[protein] + CoA. Its function is as follows. Palmitoyltransferase that catalyzes the addition of palmitate onto various protein substrates and is involved in a variety of cellular processes. Has no stringent fatty acid selectivity and in addition to palmitate can also transfer onto target proteins myristate from tetradecanoyl-CoA and stearate from octadecanoyl-CoA. Plays a role in axonogenesis. The polypeptide is Palmitoyltransferase ZDHHC17 (Danio rerio (Zebrafish)).